Consider the following 348-residue polypeptide: Phenylalanine--tRNA ligase alpha subunit (348 aa).

E268 is a binding site for Mg(2+).

This sequence belongs to the class-II aminoacyl-tRNA synthetase family. Phe-tRNA synthetase alpha subunit type 1 subfamily. As to quaternary structure, tetramer of two alpha and two beta subunits. The cofactor is Mg(2+).

It is found in the cytoplasm. The catalysed reaction is tRNA(Phe) + L-phenylalanine + ATP = L-phenylalanyl-tRNA(Phe) + AMP + diphosphate + H(+). This chain is Phenylalanine--tRNA ligase alpha subunit, found in Bordetella parapertussis (strain 12822 / ATCC BAA-587 / NCTC 13253).